Here is a 289-residue protein sequence, read N- to C-terminus: ATP phosphoribosyltransferase (289 aa).

This sequence belongs to the ATP phosphoribosyltransferase family. Long subfamily. Requires Mg(2+) as cofactor.

The protein localises to the cytoplasm. The enzyme catalyses 1-(5-phospho-beta-D-ribosyl)-ATP + diphosphate = 5-phospho-alpha-D-ribose 1-diphosphate + ATP. Its pathway is amino-acid biosynthesis; L-histidine biosynthesis; L-histidine from 5-phospho-alpha-D-ribose 1-diphosphate: step 1/9. With respect to regulation, feedback inhibited by histidine. In terms of biological role, catalyzes the condensation of ATP and 5-phosphoribose 1-diphosphate to form N'-(5'-phosphoribosyl)-ATP (PR-ATP). Has a crucial role in the pathway because the rate of histidine biosynthesis seems to be controlled primarily by regulation of HisG enzymatic activity. The protein is ATP phosphoribosyltransferase of Pelotomaculum thermopropionicum (strain DSM 13744 / JCM 10971 / SI).